A 606-amino-acid chain; its full sequence is Lysosomal cobalamin transporter ABCD4 (606 aa).

The 294-residue stretch at N39 to T332 folds into the ABC transmembrane type-1 domain. Helical transmembrane passes span F43–I63, L76–L96, I190–M210, Y279–G299, and A314–L334. The 215-residue stretch at L389–I603 folds into the ABC transporter domain. An ATP-binding site is contributed by G421–T428.

This sequence belongs to the ABC transporter superfamily. ABCD family. Peroxisomal fatty acyl CoA transporter (TC 3.A.1.203) subfamily. In terms of assembly, homodimer or heterodimer. Interacts with LMBRD1; this interaction induces the translocation of ABCD4 from the ER to the lysosome membrane. Interacts with LMBRD1 and MMACHC; this interaction ensures the transport of cobalamin from the lysosome to the cytosol. Ubiquitous.

Its subcellular location is the endoplasmic reticulum membrane. The protein localises to the lysosome membrane. It catalyses the reaction an R-cob(III)alamin(out) + ATP + H2O = an R-cob(III)alamin(in) + ADP + phosphate + H(+). Functionally, lysosomal membrane protein that transports cobalamin (Vitamin B12) from the lysosomal lumen to the cytosol in an ATP-dependent manner. Targeted by LMBRD1 lysosomal chaperone from the endoplasmic reticulum to the lysosomal membrane. Then forms a complex with lysosomal chaperone LMBRD1 and cytosolic MMACHC to transport cobalamin across the lysosomal membrane. The chain is Lysosomal cobalamin transporter ABCD4 from Homo sapiens (Human).